A 334-amino-acid polypeptide reads, in one-letter code: Putative fatty acid elongase 1 (334 aa).

At 1–51 (MDLTGAHMLKIHRPSIDHPFGVDLWHLFEQLSIKTIGWNPSEFEYIPGKTP) the chain is on the lumenal side. Residues 52–72 (MSQWSSVIVSITAYYVIILSG) form a helical membrane-spanning segment. Topologically, residues 73-86 (RAIMTNRKPLKQRR) are cytoplasmic. The helical transmembrane segment at 87-107 (LFQLHNFILTIISGALLALLV) threads the bilayer. Topologically, residues 108–135 (EEVFRNYMRNGLFYCVCDSRHFTQRLVT) are lumenal. Residues 136 to 156 (LYYLNYLTKYLELMDTVFLFL) traverse the membrane as a helical segment. The Cytoplasmic segment spans residues 157–160 (KKKP). Residues 161–181 (LAFLHCYHHGITALLCFTQLL) form a helical membrane-spanning segment. Residues 182–187 (GRTSVQ) are Lumenal-facing. The chain crosses the membrane as a helical span at residues 188–208 (WGVIGLNLYVHVIMYSYYFLA). At 209–224 (ACGRRVWWKQWVTRVQ) the chain is on the cytoplasmic side. A helical membrane pass occupies residues 225–245 (IIQFVLDLILCYFGTYSHIAF). At 246–260 (RYFPWLPHVGDCSGS) the chain is on the lumenal side. The helical transmembrane segment at 261-281 (LFAAFFGCGVLSSYLFLFIGF) threads the bilayer. Residues 282 to 334 (YINTYIKRGAKKNQRKAAGKADNTSVAAAAGSEALAATTATNASPFSARSRKL) are Cytoplasmic-facing. Ser325 is modified (phosphoserine).

Belongs to the ELO family.

The protein localises to the endoplasmic reticulum membrane. The catalysed reaction is a very-long-chain acyl-CoA + malonyl-CoA + H(+) = a very-long-chain 3-oxoacyl-CoA + CO2 + CoA. Its function is as follows. May be involved in the synthesis of very long chain fatty acids. The sequence is that of Putative fatty acid elongase 1 from Schizosaccharomyces pombe (strain 972 / ATCC 24843) (Fission yeast).